The chain runs to 270 residues: MDCCKKKRVKKVAKRKSEKVIHLDPDALRYLRFRIGGKYMAERHMFLKKDPSKENSIIVSNIPAFVGEGVVLAIIDQFASFEVEESFVQRSNTADNSLSQGQLTMSITFDKPEAVIQTLALCQDVGPFTITDFLEDPEFPSVLKDSTTLYRKLFPSEEQIQEMADTYVERYDTEQTEARKEAKRKYSEPDEDGWITVTKAKKAAKSVKLKKEDVPLIGGLNNKKKKVDLAYYTFQIKKNRQEKAQELLKKFEEDRKRITQLKQARNFKPI.

Residues 233 to 268 adopt a coiled-coil conformation; the sequence is TFQIKKNRQEKAQELLKKFEEDRKRITQLKQARNFK.

Belongs to the RRP7 family.

In Caenorhabditis elegans, this protein is Ribosomal RNA-processing protein 7 homolog.